The following is a 312-amino-acid chain: Malate dehydrogenase (312 aa).

Residues 7–13 (GAAGGIG) and Asp-34 contribute to the NAD(+) site. 2 residues coordinate substrate: Arg-81 and Arg-87. Residues Asn-94 and 117 to 119 (ITN) each bind NAD(+). The substrate site is built by Asn-119 and Arg-153. His-177 functions as the Proton acceptor in the catalytic mechanism. Met-228 lines the NAD(+) pocket.

The protein belongs to the LDH/MDH superfamily. MDH type 1 family. Homodimer.

The enzyme catalyses (S)-malate + NAD(+) = oxaloacetate + NADH + H(+). Functionally, catalyzes the reversible oxidation of malate to oxaloacetate. The protein is Malate dehydrogenase of Mannheimia succiniciproducens (strain KCTC 0769BP / MBEL55E).